The sequence spans 1084 residues: Siderophore biosynthesis regulatory protein URBS1 (1084 aa).

Disordered regions lie at residues 1 to 164, 245 to 283, and 300 to 337; these read MALP…QSSS, AEEH…RDSY, and RPVH…AGMR. Residues 23-51 show a composition bias toward low complexity; it reads QAAAASSSSSSSSSHHPPPRIAARPIAPA. 2 stretches are compositionally biased toward polar residues: residues 97–106 and 128–141; these read SHHNASSTAT and RSQS…NRSQ. The segment covering 150-164 has biased composition (low complexity); that stretch reads PSRSQPNSPLLQSSS. Positions 245-260 are enriched in basic and acidic residues; the sequence is AEEHAKMQRYSDEHPR. A GATA-type 1 zinc finger spans residues 338-362; that stretch reads CSNCGVTSTPLWRRAPDGSTICNAC. Disordered regions lie at residues 372-405 and 442-472; these read HRSA…REDD and VSKR…KMDD. Residues 373 to 385 are compositionally biased toward polar residues; that stretch reads RSASNRLSGSDAS. The GATA-type 2 zinc-finger motif lies at 482–506; the sequence is CTNCQTTTTPLWRRDEDGNNICNAC. Disordered regions lie at residues 559-595, 643-679, 692-803, 841-940, 953-1019, and 1040-1084; these read IAPA…MREA, RAGA…DERD, THAA…TKLS, EAAG…SRRN, AAVP…DDHW, and ARPV…APRT. Composition is skewed to basic and acidic residues over residues 650–659 and 715–725; these read RTSHPDDSRS and RLGRSELHGES. The segment covering 752-781 has biased composition (basic residues); sequence PHHHHHHHHHHANHASHAVHHGHHHHHHHP. Positions 875–888 are enriched in basic and acidic residues; the sequence is RGTRSGHDSIKQEA. The segment covering 961-970 has biased composition (polar residues); the sequence is SPPSTVSNPA. Positions 1070-1084 are enriched in low complexity; it reads PVASSPSQAVSAPRT.

It is found in the nucleus. Functionally, involved in the regulation of secreted ferrichrome-type siderophores. Acts directly or indirectly to repress the biosynthesis of siderophores. The protein is Siderophore biosynthesis regulatory protein URBS1 (URBS1) of Mycosarcoma maydis (Corn smut fungus).